The chain runs to 274 residues: Proteasome subunit beta (274 aa).

Positions methionine 1–glycine 52 are cleaved as a propeptide — removed in mature form; by autocatalysis. The Nucleophile role is filled by threonine 53.

The protein belongs to the peptidase T1B family. As to quaternary structure, the 20S proteasome core is composed of 14 alpha and 14 beta subunits that assemble into four stacked heptameric rings, resulting in a barrel-shaped structure. The two inner rings, each composed of seven catalytic beta subunits, are sandwiched by two outer rings, each composed of seven alpha subunits. The catalytic chamber with the active sites is on the inside of the barrel. Has a gated structure, the ends of the cylinder being occluded by the N-termini of the alpha-subunits. Is capped by the proteasome-associated ATPase, ARC.

The protein localises to the cytoplasm. It catalyses the reaction Cleavage of peptide bonds with very broad specificity.. The protein operates within protein degradation; proteasomal Pup-dependent pathway. Its activity is regulated as follows. The formation of the proteasomal ATPase ARC-20S proteasome complex, likely via the docking of the C-termini of ARC into the intersubunit pockets in the alpha-rings, may trigger opening of the gate for substrate entry. Interconversion between the open-gate and close-gate conformations leads to a dynamic regulation of the 20S proteasome proteolysis activity. Component of the proteasome core, a large protease complex with broad specificity involved in protein degradation. The sequence is that of Proteasome subunit beta from Frankia alni (strain DSM 45986 / CECT 9034 / ACN14a).